Consider the following 441-residue polypeptide: GTPase Der (441 aa).

2 consecutive EngA-type G domains span residues 2 to 164 (QKVA…PADE) and 173 to 343 (IRIS…EKWQ). GTP-binding positions include 8–15 (GRPNVGKS), 55–59 (DTGGL), 116–119 (NKID), 179–186 (GRPNVGKS), 226–230 (DTAGI), and 288–291 (NKWD). In terms of domain architecture, KH-like spans 344-428 (SRIPTAELNR…PVRLKWKEKG (85 aa)).

The protein belongs to the TRAFAC class TrmE-Era-EngA-EngB-Septin-like GTPase superfamily. EngA (Der) GTPase family. In terms of assembly, associates with the 50S ribosomal subunit.

Functionally, GTPase that plays an essential role in the late steps of ribosome biogenesis. This Deinococcus geothermalis (strain DSM 11300 / CIP 105573 / AG-3a) protein is GTPase Der.